A 461-amino-acid chain; its full sequence is tRNA modification GTPase MnmE (461 aa).

(6S)-5-formyl-5,6,7,8-tetrahydrofolate-binding residues include arginine 27, glutamate 89, and arginine 128. Positions 224–382 (GLATAIVGQP…LEELINKLFF (159 aa)) constitute a TrmE-type G domain. Asparagine 234 is a binding site for K(+). GTP is bound by residues 234 to 239 (NVGKSS), 253 to 259 (TDVAGTT), and 278 to 281 (DTAG). Mg(2+) is bound at residue serine 238. Residues threonine 253, valine 255, and threonine 258 each contribute to the K(+) site. Residue threonine 259 coordinates Mg(2+). Lysine 461 contacts (6S)-5-formyl-5,6,7,8-tetrahydrofolate.

Belongs to the TRAFAC class TrmE-Era-EngA-EngB-Septin-like GTPase superfamily. TrmE GTPase family. As to quaternary structure, homodimer. Heterotetramer of two MnmE and two MnmG subunits. The cofactor is K(+).

Its subcellular location is the cytoplasm. Its function is as follows. Exhibits a very high intrinsic GTPase hydrolysis rate. Involved in the addition of a carboxymethylaminomethyl (cmnm) group at the wobble position (U34) of certain tRNAs, forming tRNA-cmnm(5)s(2)U34. The polypeptide is tRNA modification GTPase MnmE (Lactobacillus acidophilus (strain ATCC 700396 / NCK56 / N2 / NCFM)).